Consider the following 901-residue polypeptide: MLIPSKLSRPVRLDHTVVRERLLAKLSGANNFRLALITSPAGYGKTTLISQWAAGKNDIGWYSLDEGDNQQERFASYLIAAMQQATNGHCAICETMAQKRQYASLTSLFAQLFIELAEWHSPLYLVIDDYHLITNPVIHESMRFFIRHQPENLTLVVLSRNLPQLGIANLRVRDQLLEIGSQQLAFTHQEAKQFFDCRLSSPIEAAESSRICDDVSGWATALQLIALSARQNTHSAHKSARRLAGINASHLSDYLVDEVLDNVDLATRHFLLKSAILRSMNDALINRVTGEENGQMRLEEIERQGLFLQRMDDTGEWFCYHPLFGNFLRQRCQWELAAELPEIHRAAAESWMAQGFPSEAIHHALAAGDALMLRDILLNHAWSLFNHSELSLLEESLKALPWDSLLENPQLVLLQAWLMQSQHRYGEVNTLLARAEHEIKDIREGTMHAEFNALRAQVAINDGNPDEAERLAKLALEELPPGWFYSRIVATSVLGEVLHCKGELTRSLALMQQTEQMARQHDVWHYALWSLIQQSEILFAQGFLQTAWETQEKAFQLINEQHLEQLPMHEFLVRIRAQLLWAWARLDEAEASARSGIEVLSSYQPQQQLQCLAMLIQCSLARGDLDNARSQLNRLENLLGNGKYHSDWISNANKVRVIYWQMTGDKAAAANWLRHTAKPEFANNHFLQGQWRNIARAQILLGEFEPAEIVLEELNENARSLRLMSDLNRNLLLLNQLYWQAGRKSDAQRVLLDALKLANRTGFISHFVIEGEAMAQQLRQLIQLNTLPELEQHRAQRILREINQHHRHKFAHFDENFVERLLNHPEVPELIRTSPLTQREWQVLGLIYSGYSNEQIAGELEVAATTIKTHIRNLYQKLGVAHRQAAVQHAQKLLKMMGYGV.

39-46 (SPAGYGKT) contributes to the ATP binding site. The HTH luxR-type domain occupies 829–894 (ELIRTSPLTQ…AAVQHAQKLL (66 aa)). Residues 853–872 (NEQIAGELEVAATTIKTHIR) constitute a DNA-binding region (H-T-H motif).

It belongs to the MalT family. As to quaternary structure, monomer in solution. Oligomerizes to an active state in the presence of the positive effectors ATP and maltotriose.

With respect to regulation, activated by ATP and maltotriose, which are both required for DNA binding. In terms of biological role, positively regulates the transcription of the maltose regulon whose gene products are responsible for uptake and catabolism of malto-oligosaccharides. Specifically binds to the promoter region of its target genes, recognizing a short DNA motif called the MalT box. This chain is HTH-type transcriptional regulator MalT, found in Escherichia coli O127:H6 (strain E2348/69 / EPEC).